The chain runs to 214 residues: Thiamine-phosphate synthase (214 aa).

Residues 39-43 (QYRFK) and asparagine 71 each bind 4-amino-2-methyl-5-(diphosphooxymethyl)pyrimidine. Residues aspartate 72 and aspartate 91 each contribute to the Mg(2+) site. Residue serine 110 coordinates 4-amino-2-methyl-5-(diphosphooxymethyl)pyrimidine. 136–138 (TKT) is a binding site for 2-[(2R,5Z)-2-carboxy-4-methylthiazol-5(2H)-ylidene]ethyl phosphate. Lysine 139 is a binding site for 4-amino-2-methyl-5-(diphosphooxymethyl)pyrimidine. Residues glycine 166 and 186–187 (VS) contribute to the 2-[(2R,5Z)-2-carboxy-4-methylthiazol-5(2H)-ylidene]ethyl phosphate site.

The protein belongs to the thiamine-phosphate synthase family. Mg(2+) is required as a cofactor.

The enzyme catalyses 2-[(2R,5Z)-2-carboxy-4-methylthiazol-5(2H)-ylidene]ethyl phosphate + 4-amino-2-methyl-5-(diphosphooxymethyl)pyrimidine + 2 H(+) = thiamine phosphate + CO2 + diphosphate. It catalyses the reaction 2-(2-carboxy-4-methylthiazol-5-yl)ethyl phosphate + 4-amino-2-methyl-5-(diphosphooxymethyl)pyrimidine + 2 H(+) = thiamine phosphate + CO2 + diphosphate. The catalysed reaction is 4-methyl-5-(2-phosphooxyethyl)-thiazole + 4-amino-2-methyl-5-(diphosphooxymethyl)pyrimidine + H(+) = thiamine phosphate + diphosphate. The protein operates within cofactor biosynthesis; thiamine diphosphate biosynthesis; thiamine phosphate from 4-amino-2-methyl-5-diphosphomethylpyrimidine and 4-methyl-5-(2-phosphoethyl)-thiazole: step 1/1. In terms of biological role, condenses 4-methyl-5-(beta-hydroxyethyl)thiazole monophosphate (THZ-P) and 2-methyl-4-amino-5-hydroxymethyl pyrimidine pyrophosphate (HMP-PP) to form thiamine monophosphate (TMP). This is Thiamine-phosphate synthase from Hydrogenobaculum sp. (strain Y04AAS1).